A 353-amino-acid polypeptide reads, in one-letter code: DNA polymerase IV (353 aa).

The 182-residue stretch at 4 to 185 (IIHVDMDCFF…LPLSKIPGVG (182 aa)) folds into the UmuC domain. The Mg(2+) site is built by Asp-8 and Asp-103. Glu-104 is a catalytic residue.

It belongs to the DNA polymerase type-Y family. As to quaternary structure, monomer. Mg(2+) is required as a cofactor.

Its subcellular location is the cytoplasm. It catalyses the reaction DNA(n) + a 2'-deoxyribonucleoside 5'-triphosphate = DNA(n+1) + diphosphate. Its function is as follows. Poorly processive, error-prone DNA polymerase involved in untargeted mutagenesis. Copies undamaged DNA at stalled replication forks, which arise in vivo from mismatched or misaligned primer ends. These misaligned primers can be extended by PolIV. Exhibits no 3'-5' exonuclease (proofreading) activity. May be involved in translesional synthesis, in conjunction with the beta clamp from PolIII. The protein is DNA polymerase IV of Serratia proteamaculans (strain 568).